A 192-amino-acid polypeptide reads, in one-letter code: Orotate phosphoribosyltransferase (192 aa).

Residue 116-124 coordinates 5-phospho-alpha-D-ribose 1-diphosphate; that stretch reads EDIVTTGLS. Orotate is bound by residues T120 and R148.

This sequence belongs to the purine/pyrimidine phosphoribosyltransferase family. PyrE subfamily. Homodimer. Mg(2+) serves as cofactor.

The enzyme catalyses orotidine 5'-phosphate + diphosphate = orotate + 5-phospho-alpha-D-ribose 1-diphosphate. It functions in the pathway pyrimidine metabolism; UMP biosynthesis via de novo pathway; UMP from orotate: step 1/2. Catalyzes the transfer of a ribosyl phosphate group from 5-phosphoribose 1-diphosphate to orotate, leading to the formation of orotidine monophosphate (OMP). The protein is Orotate phosphoribosyltransferase of Bartonella bacilliformis (strain ATCC 35685 / KC583 / Herrer 020/F12,63).